Reading from the N-terminus, the 309-residue chain is Protein FdhE homolog (309 aa).

This sequence belongs to the FdhE family.

The protein resides in the cytoplasm. Functionally, necessary for formate dehydrogenase activity. This chain is Protein FdhE homolog, found in Serratia proteamaculans (strain 568).